Consider the following 421-residue polypeptide: Testin (421 aa).

The region spanning 92–199 (MILTNPVAAK…GDVKLPREMD (108 aa)) is the PET domain. The interval 133-164 (EKQPVAGSEGAQYRKKQLAKQLPAHDQDPSKC) is disordered. The span at 155–164 (PAHDQDPSKC) shows a compositional bias: basic and acidic residues. 3 consecutive LIM zinc-binding domains span residues 234–297 (YSCY…CDSE), 299–359 (PRCA…NHAV), and 362–421 (QGCH…KMMS).

This sequence belongs to the prickle / espinas / testin family. In terms of assembly, interacts via LIM domain 1 with ZYX. Interacts (via LIM domain 3) with ENAH and VASP. Interacts with ALKBH4, talin, actin, alpha-actinin, GRIP1 and PXN. Interacts (via LIM domain 2) with ACTL7A (via N-terminus). Heterodimer with ACTL7A; the heterodimer interacts with ENAH to form a heterotrimer.

Its subcellular location is the cytoplasm. The protein resides in the cell junction. It localises to the focal adhesion. Functionally, scaffold protein that may play a role in cell adhesion, cell spreading and in the reorganization of the actin cytoskeleton. Plays a role in the regulation of cell proliferation. May act as a tumor suppressor. The sequence is that of Testin (TES) from Neofelis nebulosa (Clouded leopard).